Reading from the N-terminus, the 276-residue chain is Protein MGF 360-15R (276 aa).

Belongs to the asfivirus MGF 360 family.

Functionally, plays a role in virus cell tropism, and may be required for efficient virus replication in macrophages. This is Protein MGF 360-15R from African swine fever virus (isolate Tick/South Africa/Pretoriuskop Pr4/1996) (ASFV).